The following is a 244-amino-acid chain: MSTGISSDLHLHPRALNFSKTSKSGLSNRKVSFSSVGYAQNRKLSCSVSSTENVAPKDDDRGKDRPLVKMCGITSARDAAMAVEAGADFIGMIIWPHSKRSISLSVAKDISQVAREGGAKPVGVFVEDDENTILRAADSSDLELVQLHGNSSRAAFSRLVRERKVIYVLNANEDGKLLNVVPEEDGHLADWILVDSATGGRYLDQLLSFFALSHCNVFLRGTSYTITLVHETVCLSQVTEISRV.

A chloroplast-targeting transit peptide spans 1 to 32 (MSTGISSDLHLHPRALNFSKTSKSGLSNRKVS).

The protein belongs to the TrpF family.

The protein resides in the plastid. The protein localises to the chloroplast. It carries out the reaction N-(5-phospho-beta-D-ribosyl)anthranilate = 1-(2-carboxyphenylamino)-1-deoxy-D-ribulose 5-phosphate. It functions in the pathway amino-acid biosynthesis; L-tryptophan biosynthesis; L-tryptophan from chorismate: step 3/5. This Arabidopsis thaliana (Mouse-ear cress) protein is N-(5'-phosphoribosyl)anthranilate isomerase 3, chloroplastic (PAI3).